Here is a 628-residue protein sequence, read N- to C-terminus: Glutamyl-tRNA(Gln) amidotransferase subunit E (628 aa).

It belongs to the GatB/GatE family. GatE subfamily. In terms of assembly, heterodimer of GatD and GatE.

The catalysed reaction is L-glutamyl-tRNA(Gln) + L-glutamine + ATP + H2O = L-glutaminyl-tRNA(Gln) + L-glutamate + ADP + phosphate + H(+). Functionally, allows the formation of correctly charged Gln-tRNA(Gln) through the transamidation of misacylated Glu-tRNA(Gln) in organisms which lack glutaminyl-tRNA synthetase. The reaction takes place in the presence of glutamine and ATP through an activated gamma-phospho-Glu-tRNA(Gln). The GatDE system is specific for glutamate and does not act on aspartate. The chain is Glutamyl-tRNA(Gln) amidotransferase subunit E from Sulfurisphaera tokodaii (strain DSM 16993 / JCM 10545 / NBRC 100140 / 7) (Sulfolobus tokodaii).